The chain runs to 685 residues: Putative protein FAR1-RELATED SEQUENCE 10 (685 aa).

The FAR1 domain occupies 69-161; that stretch reads EYYSTFARKS…SNVHNHELLE (93 aa). The region spanning 292-388 is the MULE domain; it reads VVVFDTSYRS…FMSHIVSKLA (97 aa). The segment at 565–603 adopts an SWIM-type zinc-finger fold; that stretch reads GECCVIWNPENEEIQCSCKEFEHSGILCRHTLRVLTVKN.

This sequence belongs to the FHY3/FAR1 family.

The sequence is that of Putative protein FAR1-RELATED SEQUENCE 10 (FRS10) from Arabidopsis thaliana (Mouse-ear cress).